The primary structure comprises 123 residues: Small ribosomal subunit protein uS13 (123 aa).

Basic residues predominate over residues 99–113; the sequence is RGQRTHTNARTRKGG. The interval 99-123 is disordered; it reads RGQRTHTNARTRKGGSRLAVAAKKK.

This sequence belongs to the universal ribosomal protein uS13 family. Part of the 30S ribosomal subunit. Forms a loose heterodimer with protein S19. Forms two bridges to the 50S subunit in the 70S ribosome.

Its function is as follows. Located at the top of the head of the 30S subunit, it contacts several helices of the 16S rRNA. In the 70S ribosome it contacts the 23S rRNA (bridge B1a) and protein L5 of the 50S subunit (bridge B1b), connecting the 2 subunits; these bridges are implicated in subunit movement. Contacts the tRNAs in the A and P-sites. This Anaplasma phagocytophilum (strain HZ) protein is Small ribosomal subunit protein uS13.